Consider the following 329-residue polypeptide: Ribosomal RNA small subunit methyltransferase C (329 aa).

The protein belongs to the methyltransferase superfamily. RsmC family. As to quaternary structure, monomer.

The protein localises to the cytoplasm. It catalyses the reaction guanosine(1207) in 16S rRNA + S-adenosyl-L-methionine = N(2)-methylguanosine(1207) in 16S rRNA + S-adenosyl-L-homocysteine + H(+). Specifically methylates the guanine in position 1207 of 16S rRNA in the 30S particle. In Actinobacillus pleuropneumoniae serotype 7 (strain AP76), this protein is Ribosomal RNA small subunit methyltransferase C.